Here is a 178-residue protein sequence, read N- to C-terminus: Protein GrpE (178 aa).

Residues 1–11 (MSENQNPPPSP) are compositionally biased toward pro residues. A disordered region spans residues 1-23 (MSENQNPPPSPEEIEAAMSANAA).

It belongs to the GrpE family. As to quaternary structure, homodimer.

It localises to the cytoplasm. In terms of biological role, participates actively in the response to hyperosmotic and heat shock by preventing the aggregation of stress-denatured proteins, in association with DnaK and GrpE. It is the nucleotide exchange factor for DnaK and may function as a thermosensor. Unfolded proteins bind initially to DnaJ; upon interaction with the DnaJ-bound protein, DnaK hydrolyzes its bound ATP, resulting in the formation of a stable complex. GrpE releases ADP from DnaK; ATP binding to DnaK triggers the release of the substrate protein, thus completing the reaction cycle. Several rounds of ATP-dependent interactions between DnaJ, DnaK and GrpE are required for fully efficient folding. The polypeptide is Protein GrpE (Acidovorax sp. (strain JS42)).